The sequence spans 96 residues: uncharacterized protein (96 aa).

Positions 1 to 18 are enriched in basic and acidic residues; it reads MSNVDRYDVHRDGIEKDR. The disordered stretch occupies residues 1–96; the sequence is MSNVDRYDVH…REQHHQPQKQ (96 aa). A compositionally biased stretch (polar residues) spans 28–46; the sequence is QNGQSQSTMDNRPPWNNDT. Residues 70–96 are compositionally biased toward basic and acidic residues; sequence TIDRQQEELTKNWTESLREQHHQPQKQ.

This is an uncharacterized protein from Caenorhabditis elegans.